The primary structure comprises 149 residues: uncharacterized protein (149 aa).

2 helical membrane-spanning segments follow: residues 91–111 and 122–142; these read IFIL…LFHY and ISIL…ICLL.

It is found in the membrane. This is an uncharacterized protein from Dictyostelium discoideum (Social amoeba).